The chain runs to 537 residues: Intercellular adhesion molecule 1 (537 aa).

The signal sequence occupies residues 1–27; sequence MASTRAKPTLPLLLALVTVVIPGPGDA. Residues 28–485 are Extracellular-facing; it reads QVSIHPREAF…LTVLYHSQNN (458 aa). Ig-like C2-type domains are found at residues 41 to 102 and 127 to 195; these read GGSV…QSSA and GKDL…LDLR. A glycan (N-linked (GlcNAc...) asparagine) is linked at Asn47. 3 disulfides stabilise this stretch: Cys48/Cys91, Cys52/Cys95, and Cys134/Cys188. The Cell attachment site; atypical signature appears at 151-153; the sequence is RGE. The Cell attachment site signature appears at 179 to 181; it reads RGD. Asn185, Asn204, Asn267, Asn311, Asn362, Asn388, Asn409, Asn456, and Asn469 each carry an N-linked (GlcNAc...) asparagine glycan. One can recognise an Ig-like C2-type 3 domain in the interval 232-299; it reads GTQQKLFCSL…LRCVLELADQ (68 aa). Residues Cys239 and Cys292 are joined by a disulfide bond. The Ig-like C2-type 4 domain maps to 327–381; that stretch reads GSQVTVKCEAHSGSKVVLLSGVEPRPPTPQVQFTLNASSEDHKRSFFCSAALEVA. A disulfide bridge connects residues Cys334 and Cys374. 3 disulfides stabilise this stretch: Cys406-Cys422, Cys422-Cys461, and Cys434-Cys461. The Ig-like C2-type 5 domain occupies 415-468; that stretch reads GSQQTLKCQAWGNPSPKMTCRRKADGALLPIGVVKSVKQEMNGTYVCHAFSSHG. Residues 486 to 509 form a helical membrane-spanning segment; sequence WTIIILVPVLLVIVGLVMAASYVY. Over 510–537 the chain is Cytoplasmic; sequence NRQRKIRIYKLQKAQEEAIKLKGQAPPP.

It belongs to the immunoglobulin superfamily. ICAM family. In terms of assembly, homodimer. Interacts with MUC1 and promotes cell aggregation in epithelial cells. Interacts with ARHGEF26/SGEF. Interacts (on T cell side) with CD81, CD247 and CD9 at immunological synapses between antigen-presenting cells and T cells. In terms of processing, monoubiquitinated, which is promoted by MARCH9 and leads to endocytosis. In terms of tissue distribution, expressed at low level on a subpopulation of lymphocytes, macrophages, and endothelial cells, but is strongly induced on these cells, and on fibroblasts and epithelial cells.

Its subcellular location is the membrane. Functionally, ICAM proteins are ligands for the leukocyte adhesion protein LFA-1 (integrin alpha-L/beta-2). During leukocyte trans-endothelial migration, ICAM1 engagement promotes the assembly of endothelial apical cups through ARHGEF26/SGEF and RHOG activation. This chain is Intercellular adhesion molecule 1 (Icam1), found in Mus musculus (Mouse).